The chain runs to 324 residues: Appendage-associated protein (324 aa).

An N-terminal signal peptide occupies residues 1-32; it reads MGCPVSRGGSPGCGRRIAEELRLAEDARLRLA. Positions 195–255 form a coiled coil; that stretch reads IAQAKEIAQA…AADKLQALGK (61 aa).

The protein resides in the secreted. Its function is as follows. Associates with actin filament appendages that are formed in the inclusion appendages of the parasitophorous vacuole during infection of the host erythrocyte. This chain is Appendage-associated protein (aaaP1), found in Anaplasma marginale (strain Florida).